Reading from the N-terminus, the 145-residue chain is 3-hydroxyacyl-[acyl-carrier-protein] dehydratase FabZ (145 aa).

Residue His51 is part of the active site.

It belongs to the thioester dehydratase family. FabZ subfamily.

It localises to the cytoplasm. The enzyme catalyses a (3R)-hydroxyacyl-[ACP] = a (2E)-enoyl-[ACP] + H2O. Involved in unsaturated fatty acids biosynthesis. Catalyzes the dehydration of short chain beta-hydroxyacyl-ACPs and long chain saturated and unsaturated beta-hydroxyacyl-ACPs. This Staphylococcus carnosus (strain TM300) protein is 3-hydroxyacyl-[acyl-carrier-protein] dehydratase FabZ.